Consider the following 98-residue polypeptide: Acylphosphatase (98 aa).

An Acylphosphatase-like domain is found at 12 to 98 (TYYVRVRGVV…ERRFERFQQQ (87 aa)). Catalysis depends on residues arginine 27 and asparagine 45.

Belongs to the acylphosphatase family.

It carries out the reaction an acyl phosphate + H2O = a carboxylate + phosphate + H(+). The chain is Acylphosphatase (acyP) from Burkholderia lata (strain ATCC 17760 / DSM 23089 / LMG 22485 / NCIMB 9086 / R18194 / 383).